The chain runs to 379 residues: Dual-specificity RNA methyltransferase RlmN (379 aa).

Glutamate 95 serves as the catalytic Proton acceptor. Residues 101–345 form the Radical SAM core domain; it reads EETRGTLCVS…TTVRKTRGDD (245 aa). Cysteine 108 and cysteine 350 form a disulfide bridge. Residues cysteine 115, cysteine 119, and cysteine 122 each contribute to the [4Fe-4S] cluster site. Residues 176–177, serine 208, 230–232, and asparagine 307 each bind S-adenosyl-L-methionine; these read GE and SLH. Cysteine 350 functions as the S-methylcysteine intermediate in the catalytic mechanism.

It belongs to the radical SAM superfamily. RlmN family. The cofactor is [4Fe-4S] cluster.

The protein localises to the cytoplasm. The enzyme catalyses adenosine(2503) in 23S rRNA + 2 reduced [2Fe-2S]-[ferredoxin] + 2 S-adenosyl-L-methionine = 2-methyladenosine(2503) in 23S rRNA + 5'-deoxyadenosine + L-methionine + 2 oxidized [2Fe-2S]-[ferredoxin] + S-adenosyl-L-homocysteine. The catalysed reaction is adenosine(37) in tRNA + 2 reduced [2Fe-2S]-[ferredoxin] + 2 S-adenosyl-L-methionine = 2-methyladenosine(37) in tRNA + 5'-deoxyadenosine + L-methionine + 2 oxidized [2Fe-2S]-[ferredoxin] + S-adenosyl-L-homocysteine. Its function is as follows. Specifically methylates position 2 of adenine 2503 in 23S rRNA and position 2 of adenine 37 in tRNAs. m2A2503 modification seems to play a crucial role in the proofreading step occurring at the peptidyl transferase center and thus would serve to optimize ribosomal fidelity. This chain is Dual-specificity RNA methyltransferase RlmN, found in Burkholderia vietnamiensis (strain G4 / LMG 22486) (Burkholderia cepacia (strain R1808)).